The chain runs to 297 residues: Small ribosomal subunit protein uS9m (297 aa).

The interval 278 to 297 is disordered; sequence VERKKPGKRKARKMPTWVKR.

The protein belongs to the universal ribosomal protein uS9 family.

It is found in the mitochondrion. The polypeptide is Small ribosomal subunit protein uS9m (MRPS9) (Kluyveromyces lactis (strain ATCC 8585 / CBS 2359 / DSM 70799 / NBRC 1267 / NRRL Y-1140 / WM37) (Yeast)).